The following is a 394-amino-acid chain: Elongation factor Tu 1 (394 aa).

The region spanning 10–204 (KPHVNVGTIG…ALDSYIPEPE (195 aa)) is the tr-type G domain. Residues 19-26 (GHVDHGKT) form a G1 region. Residue 19–26 (GHVDHGKT) participates in GTP binding. Thr26 contacts Mg(2+). Residues 60 to 64 (GITIN) form a G2 region. Residues 81–84 (DCPG) form a G3 region. GTP-binding positions include 81 to 85 (DCPGH) and 136 to 139 (NKCD). The interval 136-139 (NKCD) is G4. The interval 174–176 (SAL) is G5.

The protein belongs to the TRAFAC class translation factor GTPase superfamily. Classic translation factor GTPase family. EF-Tu/EF-1A subfamily. As to quaternary structure, monomer.

It localises to the cytoplasm. It carries out the reaction GTP + H2O = GDP + phosphate + H(+). Its function is as follows. GTP hydrolase that promotes the GTP-dependent binding of aminoacyl-tRNA to the A-site of ribosomes during protein biosynthesis. The chain is Elongation factor Tu 1 from Shewanella sp. (strain MR-4).